Consider the following 682-residue polypeptide: Penicillin-binding protein activator LpoA (682 aa).

The signal sequence occupies residues 1–26; the sequence is MLPLNSVRTHAGRLVPVMLAALFLAG. Residue Cys27 is the site of N-palmitoyl cysteine attachment. Cys27 carries S-diacylglycerol cysteine lipidation. Disordered stretches follow at residues 240-262 and 314-341; these read AKQL…TGET and ANNA…VSPT. Over residues 248 to 262 the composition is skewed to low complexity; sequence GGTPPAAAAPTTGET.

Belongs to the LpoA family. In terms of assembly, interacts with PBP1a.

It localises to the cell outer membrane. Regulator of peptidoglycan synthesis that is essential for the function of penicillin-binding protein 1A (PBP1a). This is Penicillin-binding protein activator LpoA from Dickeya chrysanthemi (strain Ech1591) (Dickeya zeae (strain Ech1591)).